A 47-amino-acid polypeptide reads, in one-letter code: Large ribosomal subunit protein bL32c (47 aa).

The protein belongs to the bacterial ribosomal protein bL32 family.

It localises to the plastid. The sequence is that of Large ribosomal subunit protein bL32c (rpl32) from Prototheca wickerhamii.